We begin with the raw amino-acid sequence, 396 residues long: MELPRLENVDLSGKRVFLRVDFNVPIENGKVTDKTRIEKTLPTIELLIKKGARIIIASHLGRPKGQTNPEFSLAPVVEVFKGLVKSNVYFSKTVIGDEPIKLSKELRDGEILVIENVRFHKEEEENEPGFSKKLAALADVYVNDAFGAAHRAHASTEGIAHLLPAYAGLLMHKEIVELSALLAKPARPFVAIIGGSKVSSKIKVLNNLFDKVNHLLIGGGMAYTFLKSRAVPVGNSLVEKDFEVQAFQLIEKAGVAGVDLQLPVDHIIGDQFNEKAKTKSVDKMGILDGWMGMDIGSKTVSNYEKIIKNAGTIFWNGPMGVFEMDKFTGGTMAIAKAISKSKAKTVVGGGDSIAAINKAKVADKITHISTGGGASLEFMEGRKLPGVEALKKKVSE.

Residues 21–23 (DFN), arginine 36, 59–62 (HLGR), arginine 118, and arginine 151 contribute to the substrate site. Residues lysine 201, glycine 292, glutamate 323, and 349-352 (GGDS) contribute to the ATP site.

The protein belongs to the phosphoglycerate kinase family. As to quaternary structure, monomer.

The protein localises to the cytoplasm. The catalysed reaction is (2R)-3-phosphoglycerate + ATP = (2R)-3-phospho-glyceroyl phosphate + ADP. Its pathway is carbohydrate degradation; glycolysis; pyruvate from D-glyceraldehyde 3-phosphate: step 2/5. The protein is Phosphoglycerate kinase of Leptospira borgpetersenii serovar Hardjo-bovis (strain L550).